A 60-amino-acid chain; its full sequence is Mastoparan-VT1 (60 aa).

The N-terminal stretch at 1-25 (MKNTILILFTAFIALLGFFGMSAEA) is a signal peptide. Residues 26-45 (LADLKADPLAGPNPDADPEA) constitute a propeptide that is removed on maturation. AXPX repeat units follow at residues 31 to 34 (ADPL), 35 to 38 (AGPN), and 41 to 44 (ADPE). Leu59 is modified (leucine amide).

Belongs to the MCD family. Mastoparan subfamily. As to expression, expressed by the venom gland.

The protein resides in the secreted. Antimicrobial peptide with activities against Gram-negative and Gram-positive bacteria and the fungi C.albicans and C.parapsilosis. Exhibits little hemolytic activity against washed human erythrocytes. Also acts as a mast cell degranulating peptide. Its mast cell degranulation activity may be related to the activation of G-protein coupled receptors in mast cells as well as interaction with other proteins located in cell endosomal membranes in the mast cells. Its function is as follows. Antimicrobial peptide with activities against Gram-negative and Gram-positive bacteria and the fungi C.albicans and C.parapsilosis. Exhibits little hemolytic activity against washed human erythrocytes. Also acts as a mast cell degranulating peptide. This chain is Mastoparan-VT1, found in Vespa tropica (Greater banded hornet).